A 1242-amino-acid polypeptide reads, in one-letter code: Membrane-associated phosphatidylinositol transfer protein 1 (1242 aa).

Phosphothreonine is present on residues Thr-59, Thr-282, and Thr-287. The disordered stretch occupies residues 259–330 (CNTGSEGPEA…HGGGVSPQSL (72 aa)). Polar residues predominate over residues 272–282 (GKPSTETQPGT). Positions 299–319 (ASPDASFGKQWSSSSRSSYSS) are enriched in low complexity. Residues Ser-300, Ser-304, Ser-319, Ser-326, Ser-329, Ser-342, Ser-345, Ser-346, and Ser-373 each carry the phosphoserine modification. The residue at position 382 (Ser-382) is a Phosphoserine; by CDK1. The segment covering 581–593 (AGTGSRGSSRRGS) has biased composition (low complexity). The tract at residues 581-678 (AGTGSRGSSR…PASSEAPDGP (98 aa)) is disordered. A phosphoserine mark is found at Ser-593, Ser-600, and Ser-621. Residues 643–656 (GSQNSLQVAPTVTS) show a composition bias toward polar residues. The DDHD domain occupies 684-878 (LDFKVSGFFL…VAFILRQVIE (195 aa)). Phosphoserine is present on Ser-894. The interval 1207-1242 (RSRGPSQVDLEGPGTPPTTLARGKTRSISLKLDSEE) is disordered. The residue at position 1209 (Arg-1209) is an Omega-N-methylarginine. Phosphoserine is present on Ser-1235.

This sequence belongs to the PtdIns transfer protein family. PI transfer class IIA subfamily. In terms of assembly, interacts with PIK4CA and VAPB. Interacts with PTK2B via its C-terminus. Interacts with RHOA. Has higher affinity for the inactive, GDP-bound form of RHOA. The CDK1-phosphorylated form interacts with PLK1. Phosphorylated on multiple sites by CDK1 at the onset of mitosis. Phosphorylation facilitates dissociation from the Golgi complex and is required for interaction with PLK1. Post-translationally, phosphorylated on threonine residues upon treatment with oleic acid. In terms of processing, phosphorylated on tyrosine residues by PTK2B.

Its subcellular location is the cytoplasm. It localises to the golgi apparatus. The protein localises to the golgi stack membrane. It is found in the endoplasmic reticulum membrane. The protein resides in the lipid droplet. Its subcellular location is the cleavage furrow. It localises to the midbody. It carries out the reaction a 1,2-diacyl-sn-glycero-3-phospho-(1D-myo-inositol)(in) = a 1,2-diacyl-sn-glycero-3-phospho-(1D-myo-inositol)(out). Functionally, catalyzes the transfer of phosphatidylinositol (PI) between membranes. Binds PI, phosphatidylcholine (PC) and phosphatidic acid (PA) with the binding affinity order of PI &gt; PA &gt; PC. Regulates RHOA activity, and plays a role in cytoskeleton remodeling. Necessary for normal completion of cytokinesis. Plays a role in maintaining normal diacylglycerol levels in the Golgi apparatus. Necessary for maintaining the normal structure of the endoplasmic reticulum and the Golgi apparatus. Required for protein export from the endoplasmic reticulum and the Golgi. Binds calcium ions. In Rattus norvegicus (Rat), this protein is Membrane-associated phosphatidylinositol transfer protein 1 (Pitpnm1).